The chain runs to 1585 residues: Sterol 3-beta-glucosyltransferase (1585 aa).

Residues 1-18 show a composition bias toward pro residues; the sequence is MSPPISPTPPPLQPPFPP. Disordered stretches follow at residues 1 to 151, 177 to 225, and 249 to 279; these read MSPP…ESSF, PWEE…PTHT, and YQYA…LPKG. Composition is skewed to polar residues over residues 65 to 92, 105 to 123, and 132 to 148; these read DQAT…NAIT, DAQT…STHE, and PRTS…QMAE. Acidic residues predominate over residues 178 to 194; sequence WEEDDDSDDGEDDDEFI. Low complexity predominate over residues 255–273; that stretch reads ETSSRRTSAAGSESSSEGE. Positions 387 to 555 constitute a GRAM 1 domain; that stretch reads ERLMEVFGLE…EAIVDVEKSP (169 aa). The 93-residue stretch at 438 to 530 folds into the PH domain; the sequence is LLVKSGPLHK…WVKAIQKVMF (93 aa). Disordered regions lie at residues 625 to 645 and 666 to 852; these read TSHA…LGMA and DGEP…GSES. Residues 670–689 show a composition bias toward basic and acidic residues; it reads LEEHSQGPHHNDEDASHLPH. Composition is skewed to polar residues over residues 760–785, 806–817, and 827–840; these read TDSS…QASV, NKPSVVDSNSAE, and SWTS…QMVK. The GRAM 2 domain occupies 862-933; it reads RKFRTFFALS…RDLYGLKAQK (72 aa). The UDP-alpha-D-glucose site is built by Ser-1043, Arg-1044, Asp-1046, Ile-1358, His-1360, His-1373, Gly-1377, Thr-1378, Asp-1397, and Gln-1398. The disordered stretch occupies residues 1499–1552; sequence NRVRSRSRSRSRSSQGRFSPRRHTVDDDGWSVVSGGSRSRSGSASAVTSPERRP. Residues 1529-1545 show a composition bias toward low complexity; sequence SVVSGGSRSRSGSASAV.

This sequence belongs to the glycosyltransferase 28 family.

It localises to the cytoplasm. It is found in the membrane. It catalyses the reaction a sterol + UDP-alpha-D-glucose = a sterol 3-beta-D-glucoside + UDP + H(+). The catalysed reaction is ergosterol + UDP-alpha-D-glucose = ergosteryl 3-beta-D-glucoside + UDP + H(+). Functionally, sterol glycosyltransferase responsible for the glycosylation of ergosterol to form ergosterol-glucoside. The polypeptide is Sterol 3-beta-glucosyltransferase (Cryptococcus neoformans var. neoformans serotype D (strain B-3501A) (Filobasidiella neoformans)).